The chain runs to 122 residues: Large ribosomal subunit protein uL14 (122 aa).

It belongs to the universal ribosomal protein uL14 family. As to quaternary structure, part of the 50S ribosomal subunit. Forms a cluster with proteins L3 and L19. In the 70S ribosome, L14 and L19 interact and together make contacts with the 16S rRNA in bridges B5 and B8.

In terms of biological role, binds to 23S rRNA. Forms part of two intersubunit bridges in the 70S ribosome. This Treponema denticola (strain ATCC 35405 / DSM 14222 / CIP 103919 / JCM 8153 / KCTC 15104) protein is Large ribosomal subunit protein uL14.